The chain runs to 260 residues: Proteasome subunit alpha (260 aa).

The disordered stretch occupies residues 241–260 (VEEEEVKEKEEDYSELDSHY).

This sequence belongs to the peptidase T1A family. In terms of assembly, the 20S proteasome core is composed of 14 alpha and 14 beta subunits that assemble into four stacked heptameric rings, resulting in a barrel-shaped structure. The two inner rings, each composed of seven catalytic beta subunits, are sandwiched by two outer rings, each composed of seven alpha subunits. The catalytic chamber with the active sites is on the inside of the barrel. Has a gated structure, the ends of the cylinder being occluded by the N-termini of the alpha-subunits. Is capped at one or both ends by the proteasome regulatory ATPase, PAN.

Its subcellular location is the cytoplasm. With respect to regulation, the formation of the proteasomal ATPase PAN-20S proteasome complex, via the docking of the C-termini of PAN into the intersubunit pockets in the alpha-rings, triggers opening of the gate for substrate entry. Interconversion between the open-gate and close-gate conformations leads to a dynamic regulation of the 20S proteasome proteolysis activity. Component of the proteasome core, a large protease complex with broad specificity involved in protein degradation. In Pyrococcus horikoshii (strain ATCC 700860 / DSM 12428 / JCM 9974 / NBRC 100139 / OT-3), this protein is Proteasome subunit alpha.